Reading from the N-terminus, the 420-residue chain is Transcription factor TCP4 (420 aa).

Residues 1–27 form a disordered region; the sequence is MSDDQFHHPPPPSSMRHRSTSDAADGG. Residues 45–103 form the TCP domain; sequence RKDRHSKVCTAKGPRDRRVRLSAHTAIQFYDVQDRLGFDRPSKAVDWLIKKAKTSIDEL. 4 disordered regions span residues 121–176, 228–256, 353–379, and 399–420; these read NAKP…PSMD, LSLQSFPDGPPSLLHHQHHHHTSASASEP, HQSISTDDLNHHHHLPPPVHQSAIPGI, and QEEEQHDGLTHKPSSASSISRH. The segment covering 410-420 has biased composition (polar residues); sequence KPSSASSISRH.

Interacts with AHL27 and AHL29. Interacts with SPL. Interacts with JGB. Interacts with GI (via N-terminus). In terms of tissue distribution, expressed in cotyledons, particularly in the vascular region, in leaves, roots, buds, flowers and immature siliques.

Its subcellular location is the nucleus. Functionally, transcription factor playing a pivotal role in the control of morphogenesis of shoot organs by negatively regulating the expression of boundary-specific genes such as CUC genes, probably through the induction of miRNA (e.g. miR164). Required during early steps of embryogenesis. Participates in ovule development. Activates LOX2 expression by binding to the 5'-GGACCA-3' motif found in its promoter. Activates YUC5 transcription by binding to the 5'-GTGGGCCA-3' motif found in its promoter. Through the activation of YUC5 transcription, integrates the auxin response to a brassinosteroid-dependent molecular circuit that promotes cell elongation in hypocotyls. Activates GIS transcription by binding to the 5'-TGGTCC-3' motif found in its promoter. Involved in the regulation of trichome branching through the activation of GIS transcription. Activates CO transcription by binding to the 5'-GGACCAC-3' motif found in its promoter. Involved in the regulation of photoperiodic flowering through the activation of CO transcription. Activates TCL1 and TCL2 transcription by binding to the 5'-TGGCCA-3' and 5'-GTGGACCA-3' motifS found in their respective promoters. Involved in the suppression of trichome initiaition through the activation of TCL1 and TCL2 transcription. Activates HAT2 transcription by binding to the 5'-TGGTCCAC-3' motif found in its promoter. Through the activation of HAT2 transcription, involved in the auxin-independent reprogramming of mitotic cells to exit division and acquire differentiation competence within the transition zone. The sequence is that of Transcription factor TCP4 (TCP4) from Arabidopsis thaliana (Mouse-ear cress).